The sequence spans 214 residues: MKLLIMGPPGAGKGTQAEKIVKEFGITHISTGDMFRAALKNQTPLGLKAKEYMDKGELVPDEIVIAMVEERISAPDCAKGFLLDGFPRTIPQAEALDKKLAEMGITLDGVINIEVPREELIERLTGRRVCRQCGATYHVKFNPPKVEGVCDACGGELYQRSDDSLETVSNRLDVYEAQTAPLKDYYAKTGLLKNIDGTKSIEEVFASIKNALQK.

10–15 (GAGKGT) contributes to the ATP binding site. The interval 30-59 (STGDMFRAALKNQTPLGLKAKEYMDKGELV) is NMP. AMP is bound by residues Thr-31, Arg-36, 57–59 (ELV), 85–88 (GFPR), and Gln-92. The LID stretch occupies residues 126-163 (GRRVCRQCGATYHVKFNPPKVEGVCDACGGELYQRSDD). Arg-127 provides a ligand contact to ATP. Zn(2+)-binding residues include Cys-130 and Cys-133. 136-137 (TY) contributes to the ATP binding site. Zn(2+)-binding residues include Cys-150 and Cys-153. Residues Arg-160 and Arg-171 each contribute to the AMP site. Lys-199 contacts ATP.

This sequence belongs to the adenylate kinase family. In terms of assembly, monomer.

It localises to the cytoplasm. The catalysed reaction is AMP + ATP = 2 ADP. The protein operates within purine metabolism; AMP biosynthesis via salvage pathway; AMP from ADP: step 1/1. In terms of biological role, catalyzes the reversible transfer of the terminal phosphate group between ATP and AMP. Plays an important role in cellular energy homeostasis and in adenine nucleotide metabolism. This Carboxydothermus hydrogenoformans (strain ATCC BAA-161 / DSM 6008 / Z-2901) protein is Adenylate kinase.